An 83-amino-acid chain; its full sequence is MSSGGLLLLLGLLTLLEILTPVSSKDRPKFCELPADSGSCKGNFQAFYYNPDQHQCLEFIYGGCDGNANNFKTIDECKRTCAA.

The first 24 residues, 1 to 24, serve as a signal peptide directing secretion; that stretch reads MSSGGLLLLLGLLTLLEILTPVSS. Positions 31–81 constitute a BPTI/Kunitz inhibitor domain; that stretch reads CELPADSGSCKGNFQAFYYNPDQHQCLEFIYGGCDGNANNFKTIDECKRTC. Intrachain disulfides connect cysteine 31/cysteine 81, cysteine 40/cysteine 64, and cysteine 56/cysteine 77.

It belongs to the venom Kunitz-type family. As to expression, expressed by the venom gland.

The protein resides in the secreted. Functionally, serine protease inhibitor. The chain is Kunitz-type serine protease inhibitor stephenin-2 from Hoplocephalus stephensii (Stephens's banded snake).